The primary structure comprises 258 residues: PHD finger protein ALFIN-LIKE 5 (258 aa).

Residues 143–205 are disordered; that stretch reads AKKQTKEKAP…EEEERDNTLC (63 aa). Positions 152–165 are enriched in polar residues; sequence PNSTNKPNKPSSKM. Over residues 184–200 the composition is skewed to acidic residues; that stretch reads DDDESGDEYADEEEEER. A PHD-type zinc finger spans residues 202–254; the sequence is NTLCGSCGTNDGKDEFWICCDSCERWYHGKCVKITPARAEHIKHYKCPDCGNK.

Belongs to the Alfin family.

The protein resides in the nucleus. Functionally, histone-binding component that specifically recognizes H3 tails trimethylated on 'Lys-4' (H3K4me3), which mark transcription start sites of virtually all active genes. The sequence is that of PHD finger protein ALFIN-LIKE 5 from Oryza sativa subsp. indica (Rice).